The chain runs to 197 residues: KSYFLGGAGERGLTIEGNFIKFTAIGVYLEDIAVASLAAKWKGKSSEELLETLDFYRDIISGPFEKLIRGSKIRELSGPEYSRKVMENCVAHLKSVGTYGDAEAEAMQKFAEAFKPVNFPPGASVFYRQSPDGILGLSFSPDTSIPEKEAALIENKAVSSAVLETMIGEHAVSPDLKRCLAARLPALLNEGAFKIGN.

The substrate site is built by threonine 23, asparagine 88, and threonine 165.

It belongs to the chalcone isomerase family.

It catalyses the reaction a chalcone = a flavanone.. It functions in the pathway secondary metabolite biosynthesis; flavonoid biosynthesis. Catalyzes the intramolecular cyclization of bicyclic chalcones into tricyclic (S)-flavanones. Responsible for the isomerization of 4,2',4',6'-tetrahydroxychalcone (also termed chalcone) into naringenin. This chain is Chalcone--flavanone isomerase 2 (CHI2), found in Medicago sativa (Alfalfa).